Reading from the N-terminus, the 279-residue chain is Acetyl-coenzyme A carboxylase carboxyl transferase subunit beta (279 aa).

In terms of domain architecture, CoA carboxyltransferase N-terminal spans 23-279 (MWWKCDECGA…IVRLMTMLAP (257 aa)). Residues Cys-27, Cys-30, Cys-46, and Cys-49 each coordinate Zn(2+). Residues 27-49 (CDECGAMLHKKQLEDNFYTCSEC) form a C4-type zinc finger.

Belongs to the AccD/PCCB family. In terms of assembly, acetyl-CoA carboxylase is a heterohexamer composed of biotin carboxyl carrier protein (AccB), biotin carboxylase (AccC) and two subunits each of ACCase subunit alpha (AccA) and ACCase subunit beta (AccD). Requires Zn(2+) as cofactor.

The protein localises to the cytoplasm. It carries out the reaction N(6)-carboxybiotinyl-L-lysyl-[protein] + acetyl-CoA = N(6)-biotinyl-L-lysyl-[protein] + malonyl-CoA. Its pathway is lipid metabolism; malonyl-CoA biosynthesis; malonyl-CoA from acetyl-CoA: step 1/1. Functionally, component of the acetyl coenzyme A carboxylase (ACC) complex. Biotin carboxylase (BC) catalyzes the carboxylation of biotin on its carrier protein (BCCP) and then the CO(2) group is transferred by the transcarboxylase to acetyl-CoA to form malonyl-CoA. This is Acetyl-coenzyme A carboxylase carboxyl transferase subunit beta from Chlorobium phaeobacteroides (strain DSM 266 / SMG 266 / 2430).